An 89-amino-acid polypeptide reads, in one-letter code: Small ribosomal subunit protein uS15 (89 aa).

Belongs to the universal ribosomal protein uS15 family. Part of the 30S ribosomal subunit. Forms a bridge to the 50S subunit in the 70S ribosome, contacting the 23S rRNA.

In terms of biological role, one of the primary rRNA binding proteins, it binds directly to 16S rRNA where it helps nucleate assembly of the platform of the 30S subunit by binding and bridging several RNA helices of the 16S rRNA. Its function is as follows. Forms an intersubunit bridge (bridge B4) with the 23S rRNA of the 50S subunit in the ribosome. The chain is Small ribosomal subunit protein uS15 from Prochlorococcus marinus (strain MIT 9515).